A 317-amino-acid chain; its full sequence is MSQEYLDFELPIAELEAKIESLRAVSEQDGKIDLDDEIKRLQKKSEELTKKTFANLDAWQVSRMARHPNRPYTLDYIEHIFTEFDELAGDRAFADDKAIVGGIARLDGRPVMVIGHQKGRTTKEKVRRNFGMPAPEGYRKALRLMEMADRFNMPIITFIDTPGAYPGIGAEERGQAEAIARNLREMAQLKVPVICTVIGEGGSGGALAIGVGDKVNMLQYSTYSVISPEGCASILWKSAEKASTAAEVMGLTAQRLKELNLIDSIVAEPLGGAHRDVAQMAENLKQQILADLQDLAPLSTEDLLDRRYQRLMSYGYV.

The CoA carboxyltransferase C-terminal domain maps to 40–294; that stretch reads RLQKKSEELT…KQQILADLQD (255 aa).

This sequence belongs to the AccA family. As to quaternary structure, acetyl-CoA carboxylase is a heterohexamer composed of biotin carboxyl carrier protein (AccB), biotin carboxylase (AccC) and two subunits each of ACCase subunit alpha (AccA) and ACCase subunit beta (AccD).

The protein localises to the cytoplasm. The enzyme catalyses N(6)-carboxybiotinyl-L-lysyl-[protein] + acetyl-CoA = N(6)-biotinyl-L-lysyl-[protein] + malonyl-CoA. It participates in lipid metabolism; malonyl-CoA biosynthesis; malonyl-CoA from acetyl-CoA: step 1/1. In terms of biological role, component of the acetyl coenzyme A carboxylase (ACC) complex. First, biotin carboxylase catalyzes the carboxylation of biotin on its carrier protein (BCCP) and then the CO(2) group is transferred by the carboxyltransferase to acetyl-CoA to form malonyl-CoA. This is Acetyl-coenzyme A carboxylase carboxyl transferase subunit alpha from Actinobacillus pleuropneumoniae serotype 5b (strain L20).